A 364-amino-acid chain; its full sequence is Transcription factor IIIA (364 aa).

C2H2-type zinc fingers lie at residues Phe38–His62, Phe68–His92, Phe98–His123, Tyr130–His154, Phe160–His184, Tyr187–His211, Ile215–His237, Tyr244–His269, and Phe275–His299. The segment at His299 to Cys364 is disordered. Residues Ser338–Ala352 show a composition bias toward low complexity.

It localises to the nucleus. In terms of biological role, involved in ribosomal large subunit biogenesis. Binds the approximately 50 base pairs internal control region (ICR) of 5S ribosomal RNA genes. It is required for their RNA polymerase III-dependent transcription and may also maintain the transcription of other genes. Also binds the transcribed 5S RNA's. This Mus musculus (Mouse) protein is Transcription factor IIIA (Gtf3a).